Reading from the N-terminus, the 364-residue chain is Long-wave-sensitive opsin 1 (364 aa).

The disordered stretch occupies residues 1–23 (MAQQWSLQRLAGRHPQDSYEDST). The Extracellular portion of the chain corresponds to 1 to 52 (MAQQWSLQRLAGRHPQDSYEDSTQSSIFTYTNSNSTRGPFEGPNYHIAPRWV). Residue Ser-22 is glycosylated (O-linked (GlcNAc) serine). Asn-34 carries N-linked (GlcNAc...) asparagine glycosylation. A helical membrane pass occupies residues 53 to 77 (YHLTSVWMIFVVTASVFTNGLVLAA). Topologically, residues 78–89 (TMKFKKLRHPLN) are cytoplasmic. The chain crosses the membrane as a helical span at residues 90–115 (WILVNLAVADLAETVIASTISIVNQV). Residues 116–129 (SGYFVLGHPMCVLE) lie on the Extracellular side of the membrane. Cys-126 and Cys-203 are joined by a disulfide. The chain crosses the membrane as a helical span at residues 130–149 (GYTVSLCGITGLWSLAIISW). Residues 150–168 (ERWMVVCKPFGNVRFDAKL) lie on the Cytoplasmic side of the membrane. The chain crosses the membrane as a helical span at residues 169–192 (AIVGIAFSWIWAAVWTAPPIFGWS). Residues 193-218 (RYWPHGLKTSCGPDVFSGSSYPGVQS) lie on the Extracellular side of the membrane. Residues 219–246 (YMIVLMVTCCIIPLAIIMLCYLQVWLAI) traverse the membrane as a helical segment. Over 247–268 (RAVAKQQKESESTQKAEKEVTR) the chain is Cytoplasmic. A helical membrane pass occupies residues 269–292 (MVVVMIFAYCVCWGPYTFFACFAA). Topologically, residues 293–300 (ANPGYAFH) are extracellular. A helical transmembrane segment spans residues 301–325 (PLMAALPAYFAKSATIYNPVIYVFM). At Lys-312 the chain carries N6-(retinylidene)lysine. The Cytoplasmic segment spans residues 326-364 (NRQFRNCILQLFGKKVDDGSELSSASKTEVSSVSSVSPA).

Belongs to the G-protein coupled receptor 1 family. Opsin subfamily. Phosphorylated on some or all of the serine and threonine residues present in the C-terminal region. In terms of tissue distribution, the three color pigments are found in the cone photoreceptor cells.

It is found in the membrane. Its function is as follows. Visual pigments are the light-absorbing molecules that mediate vision. They consist of an apoprotein, opsin, covalently linked to cis-retinal. This Homo sapiens (Human) protein is Long-wave-sensitive opsin 1 (OPN1LW).